The chain runs to 330 residues: Ribosomal RNA small subunit methyltransferase H (330 aa).

S-adenosyl-L-methionine-binding positions include 51 to 53 (GGH), D70, D118, and Q125. Positions 276–330 (STDSTPPGLPVPLPDRQPELRLLTRGAELPTEQETAANPRAASARLRAAERTREP) are disordered. Residues 311-321 (AANPRAASARL) are compositionally biased toward low complexity.

Belongs to the methyltransferase superfamily. RsmH family.

It localises to the cytoplasm. It carries out the reaction cytidine(1402) in 16S rRNA + S-adenosyl-L-methionine = N(4)-methylcytidine(1402) in 16S rRNA + S-adenosyl-L-homocysteine + H(+). Functionally, specifically methylates the N4 position of cytidine in position 1402 (C1402) of 16S rRNA. The sequence is that of Ribosomal RNA small subunit methyltransferase H from Thermobifida fusca (strain YX).